The primary structure comprises 98 residues: Parvalbumin beta 1 (98 aa).

Position 1 is an N-acetylserine (serine 1). EF-hand domains are found at residues lysine 32–glycine 67 and glycine 67–glycine 98. Residues aspartate 45, aspartate 47, serine 49, phenylalanine 51, glutamate 53, glutamate 56, aspartate 80, aspartate 82, aspartate 84, lysine 86, and glutamate 91 each contribute to the Ca(2+) site.

It belongs to the parvalbumin family.

Its function is as follows. In muscle, parvalbumin is thought to be involved in relaxation after contraction. It binds two calcium ions. The sequence is that of Parvalbumin beta 1 from Macruronus magellanicus (Patagonian grenadier).